The sequence spans 481 residues: Putative F-box/FBD/LRR-repeat protein At5g25850 (481 aa).

An F-box domain is found at 19 to 69 (INRLSQLSDPLICQILSHLPIKEVVTTSVLSTRWKNIWLSVPSLELIYSIF). LRR repeat units lie at residues 123-151 (VRRVRGNYFHELPLSLYVCETLVSLKLFH), 173-198 (VWFPNDATFERLVSSCPVLEDLKIDV), and 328-356 (HVTLRVSELKWLPNFLECCPNLKSLIVAF). An FBD domain is found at 401-452 (QLSFSSVPKCLLSSLQFVELNAQILRFDGEILNLAKYFLENSSILQKLTLHP).

This is Putative F-box/FBD/LRR-repeat protein At5g25850 from Arabidopsis thaliana (Mouse-ear cress).